Consider the following 376-residue polypeptide: Penicillin V acylase (376 aa).

The signal sequence occupies residues 1-29 (MIKNNKRIKSTVCALSLVALTLGSAVSLA). The Nucleophile role is filled by Cys30.

The protein belongs to the peptidase C59 family. As to quaternary structure, homotetramer. Dimer of dimers.

It localises to the periplasm. The catalysed reaction is a penicillin + H2O = 6-aminopenicillanate + a carboxylate. With respect to regulation, exhibits uncharacteristic kinetic behavior, showing positive cooperativity coupled with substrate inhibition. Penicillin acylase activity is enhanced in the presence of the reducing agent DTT, indicating active sulfhydryl group in the enzyme. Also shows enhanced activity in presence of organic solvents and detergents. Inhibited largely in presence of Ag(+), Hg(2+) and Cd(2+) ions, which have strong affinities for sulfhydryl groups. Activity is also inhibited by bile salts. Its function is as follows. Catalyzes the hydrolysis of penicillin V to 6-aminopenicillanate (6-APA). Shows high specificity towards penicillin V. Can use other beta-lactam substrates, including penicillin G, ampicillin, cephalexin, cloxacillin and dicloxacillin, but at a rate less than 10% of that of penicillin V. Does not show any activity with glyco- or tauro-conjugated bile salts. This is Penicillin V acylase from Pectobacterium atrosepticum (strain SCRI 1043 / ATCC BAA-672) (Erwinia carotovora subsp. atroseptica).